We begin with the raw amino-acid sequence, 89 residues long: MKLSIADFEEWLRERGYDLMMGEQNFRLYLDLGFSALLFYNSNLLFSFILDKVGLKSADERVPDRLRFEIAKRLRRIEATKDEIEIELL.

Residues 28–50 form a helical membrane-spanning segment; it reads LYLDLGFSALLFYNSNLLFSFIL.

It is found in the membrane. This is an uncharacterized protein from Archaeoglobus fulgidus (strain ATCC 49558 / DSM 4304 / JCM 9628 / NBRC 100126 / VC-16).